A 94-amino-acid chain; its full sequence is Co-chaperonin GroES (94 aa).

Belongs to the GroES chaperonin family. Heptamer of 7 subunits arranged in a ring. Interacts with the chaperonin GroEL.

The protein resides in the cytoplasm. Together with the chaperonin GroEL, plays an essential role in assisting protein folding. The GroEL-GroES system forms a nano-cage that allows encapsulation of the non-native substrate proteins and provides a physical environment optimized to promote and accelerate protein folding. GroES binds to the apical surface of the GroEL ring, thereby capping the opening of the GroEL channel. In Staphylococcus epidermidis (strain ATCC 35984 / DSM 28319 / BCRC 17069 / CCUG 31568 / BM 3577 / RP62A), this protein is Co-chaperonin GroES.